The chain runs to 1045 residues: Collagen alpha-1(VI) chain (1045 aa).

The first 24 residues, 1 to 24 (MKMLQGRLPLTVLHLFLLLGGGMT), serve as a signal peptide directing secretion. The VWFA 1 domain occupies 65–255 (DIFFVLDTSE…LTDDEIDNTI (191 aa)). Residues 277–613 (PSRGLSGPSG…GPPGPGGPPG (337 aa)) are disordered. The segment at 280–540 (GLSGPSGPPG…RGDDGRPGNG (261 aa)) is triple-helical region. A compositionally biased stretch (low complexity) spans 297-309 (PGLPGDRGLPGDP). Positions 327 to 360 (QGIRGEKGGRGAKGSKGDKGKRGIDGVDGQKGED) are enriched in basic and acidic residues. The segment covering 375 to 392 (DGAPGSSGPKGDPGPYGT) has biased composition (low complexity). The segment covering 400 to 409 (GTPGTGGRPG) has biased composition (gly residues). 2 consecutive short sequence motifs (cell attachment site) follow at residues 501–503 (RGD) and 554–556 (RGD). Residues 600-613 (EGPPGPPGPGGPPG) are compositionally biased toward pro residues. 2 consecutive VWFA domains span residues 638 to 825 (DLLF…LHNV) and 849 to 1035 (DITM…YQSI).

The protein belongs to the type VI collagen family.

The protein localises to the secreted. The protein resides in the extracellular space. It is found in the extracellular matrix. Collagen VI acts as a cell-binding protein. The polypeptide is Collagen alpha-1(VI) chain (col6a1) (Xenopus laevis (African clawed frog)).